A 408-amino-acid chain; its full sequence is Gustatory receptor 10a (408 aa).

Topologically, residues 1-20 are cytoplasmic; it reads MTSPDERKSFWERHEFKFYR. A helical membrane pass occupies residues 21–38; that stretch reads YGHVYALIYGQVVIDYVP. Over 39–48 the chain is Extracellular; the sequence is QRALKRGVKV. The helical transmembrane segment at 49–69 threads the bilayer; it reads LLIAYGHLFSMLLIVVLPGYF. The Cytoplasmic portion of the chain corresponds to 70 to 86; that stretch reads CYHFRTLTDTLDRRLQL. A helical membrane pass occupies residues 87-107; that stretch reads LFYVSFTNTAIKYATVIVTYV. Residues 108-144 lie on the Extracellular side of the membrane; sequence ANTVHFEAINQRCTMQRTHLEFEFKNAPQEPKRPFEF. Residues 145-165 traverse the membrane as a helical segment; it reads FMYFKFCLINLMMMIQVCGIF. At 166 to 270 the chain is on the cytoplasmic side; it reads AQYGEVGKGS…RESFRMHQFQ (105 aa). A helical membrane pass occupies residues 271-291; the sequence is LIGLMLSTLINNLTNFYTLFH. Topologically, residues 292–304 are extracellular; it reads MLAKQSLEEVSYP. A helical membrane pass occupies residues 305–325; it reads VVVGSVYATGFYIDTYIVALI. At 326–381 the chain is on the cytoplasmic side; it reads NEHIKLELEAVALTMRRFAEPREMDERLTREIEHLSLELLNYQPPMLCGLLHLDRR. The chain crosses the membrane as a helical span at residues 382 to 402; the sequence is LVYLIAVTAFSYFITLVQFDL. The Extracellular segment spans residues 403-408; that stretch reads YLRKKS.

It belongs to the insect chemoreceptor superfamily. Gustatory receptor (GR) family. Gr10a subfamily. Expressed in the medial aspect of the third antennal segment, and in neurons of the terminal external chemosensory organ of larvae.

It localises to the cell membrane. Functionally, probable gustatory receptor which mediates acceptance or avoidance behavior, depending on its substrates. This is Gustatory receptor 10a (Gr10a) from Drosophila melanogaster (Fruit fly).